The chain runs to 156 residues: Small ribosomal subunit protein uS7c (156 aa).

This sequence belongs to the universal ribosomal protein uS7 family. Part of the 30S ribosomal subunit.

The protein localises to the plastid. Its subcellular location is the chloroplast. Its function is as follows. One of the primary rRNA binding proteins, it binds directly to 16S rRNA where it nucleates assembly of the head domain of the 30S subunit. This chain is Small ribosomal subunit protein uS7c (rps7), found in Thalassiosira pseudonana (Marine diatom).